We begin with the raw amino-acid sequence, 83 residues long: Toxin TdNa5 (83 aa).

Positions 1–20 (MKTIIFFIACLMLIDVVVES) are cleaved as a signal peptide. Positions 21–82 (KDGYIIEHRG…IFDSNNNKCG (62 aa)) constitute an LCN-type CS-alpha/beta domain. Intrachain disulfides connect C31-C81, C35-C57, C43-C62, and C47-C64. C81 is modified (cysteine amide).

This sequence belongs to the long (4 C-C) scorpion toxin superfamily. Sodium channel inhibitor family. Beta subfamily. As to expression, expressed by the venom gland.

Its subcellular location is the secreted. Inhibits the sodium currents (Nav) in an apparent irreversible manner. Produces small depolarization and induces repetitive firing in squid axons. Is specific for arthropods (crickets, triatomides, crabs and squids), but is non-toxic to mice. Shows antibacterial activity against both Gram-positive and Gram-negative bacteria. This Tityus discrepans (Venezuelan scorpion) protein is Toxin TdNa5.